A 185-amino-acid polypeptide reads, in one-letter code: Ubiquitin-conjugating enzyme E2 5 (185 aa).

One can recognise a UBC core domain in the interval 1–148 (MSSPSKRREM…VKEYCEKYAK (148 aa)). Catalysis depends on Cys85, which acts as the Glycyl thioester intermediate. Residues 146–185 (YAKPRADTEEMSSDDEMSEDEYASDGDDEDDVAIAGKLDP) form a disordered region. Residues 154–177 (EEMSSDDEMSEDEYASDGDDEDDV) are compositionally biased toward acidic residues.

Belongs to the ubiquitin-conjugating enzyme family. As to expression, expressed in developing ovules, but not in vascular tissues.

The catalysed reaction is S-ubiquitinyl-[E1 ubiquitin-activating enzyme]-L-cysteine + [E2 ubiquitin-conjugating enzyme]-L-cysteine = [E1 ubiquitin-activating enzyme]-L-cysteine + S-ubiquitinyl-[E2 ubiquitin-conjugating enzyme]-L-cysteine.. Its pathway is protein modification; protein ubiquitination. Functionally, accepts the ubiquitin from the E1 complex and catalyzes its covalent attachment to other proteins. In Arabidopsis thaliana (Mouse-ear cress), this protein is Ubiquitin-conjugating enzyme E2 5 (UBC5).